A 275-amino-acid polypeptide reads, in one-letter code: Light-independent protochlorophyllide reductase iron-sulfur ATP-binding protein (275 aa).

Residues 12–17 and K41 each bind ATP; that span reads GIGKST. Mg(2+) is bound at residue S16. [4Fe-4S] cluster is bound by residues C97 and C131. 182–183 is a binding site for ATP; the sequence is NR.

The protein belongs to the NifH/BchL/ChlL family. Homodimer. Protochlorophyllide reductase is composed of three subunits; BchL, BchN and BchB. The cofactor is [4Fe-4S] cluster.

It carries out the reaction chlorophyllide a + oxidized 2[4Fe-4S]-[ferredoxin] + 2 ADP + 2 phosphate = protochlorophyllide a + reduced 2[4Fe-4S]-[ferredoxin] + 2 ATP + 2 H2O. Its pathway is porphyrin-containing compound metabolism; bacteriochlorophyll biosynthesis (light-independent). Component of the dark-operative protochlorophyllide reductase (DPOR) that uses Mg-ATP and reduced ferredoxin to reduce ring D of protochlorophyllide (Pchlide) to form chlorophyllide a (Chlide). This reaction is light-independent. The L component serves as a unique electron donor to the NB-component of the complex, and binds Mg-ATP. In Chlorobium phaeobacteroides (strain BS1), this protein is Light-independent protochlorophyllide reductase iron-sulfur ATP-binding protein.